The sequence spans 524 residues: REH2-associated factor 1 (524 aa).

The N-terminal 22 residues, 1-22, are a transit peptide targeting the mitochondrion; that stretch reads MRRWLVASMAPQLHQLLQPVRR. The segment at 48-70 adopts a C2H2-type 1; atypical zinc-finger fold; it reads ASCPACSRVVHMCDMLTHLITAH. The C2H2-type 2; atypical zinc finger occupies 121–147; it reads YMCNWCDRRSDVYATRDKFLKHVADVH. A C2H2-type 4 zinc finger spans residues 226 to 249; the sequence is FPCELCNRTFNSEIDLLQHLETRH. A C2H2-type 3; atypical zinc finger spans residues 286–312; the sequence is VICDLCVSSSKVYKMPSALFSHIRFKH. 4 C2H2-type zinc fingers span residues 334 to 357, 376 to 399, 406 to 429, and 443 to 465; these read FVCT…NSKH, WWCH…QNKH, HPCP…SLQH, and VKCS…AVKH. Residues 463 to 524 form a disordered region; it reads VKHHKKDPRA…KTTEVSEVTS (62 aa). The segment covering 479–500 has biased composition (low complexity); sequence APTSASHVAASTSAAVPSEVEA.

As to quaternary structure, component of the REH2-associated complex (REH2C) composed of helicase REH2, associated factors H2F1 and H2F2, and mRNAs at various editing stages; the formation of the complex is RNA-independent. Within the complex, interacts with REH2; the interaction is direct. Interacts with various editing complexes including the RNA editing core (RECC) complex, the gRNA-binding (GRBC) complex (also known as the MRB1 complex) and the RNA editing mediator (REMC) complex.

The protein resides in the mitochondrion. Its function is as follows. Plays an important role in mitochondrial mRNA editing by promoting the assembly of the mRNA editosome. Facilitates the recruitment of mRNA to the REH2C complex and promotes the interaction between various editing complexes including REH2C, GRBC, REMC and RECC complexes. The chain is REH2-associated factor 1 from Trypanosoma brucei brucei (strain 927/4 GUTat10.1).